We begin with the raw amino-acid sequence, 127 residues long: Biogenesis of lysosome-related organelles complex 1 subunit BLS1 (127 aa).

The tract at residues 103 to 127 (KNSHNTNHGGCNKTKNSSKDKLLDK) is disordered. The segment covering 105–117 (SHNTNHGGCNKTK) has biased composition (polar residues).

Belongs to the BLOC1S1 family. In terms of assembly, component of the biogenesis of lysosome-related organelles complex-1 (BLOC-1).

It is found in the endosome. Functionally, component of the biogenesis of lysosome-related organelles complex-1 (BLOC-1), a complex involved in endosomal cargo sorting. In Vanderwaltozyma polyspora (strain ATCC 22028 / DSM 70294 / BCRC 21397 / CBS 2163 / NBRC 10782 / NRRL Y-8283 / UCD 57-17) (Kluyveromyces polysporus), this protein is Biogenesis of lysosome-related organelles complex 1 subunit BLS1 (BLS1).